Consider the following 436-residue polypeptide: GTPase Der (436 aa).

EngA-type G domains lie at 4–167 and 176–351; these read SVVA…PNES and IYFS…ESHT. GTP-binding positions include 10–17, 57–61, 119–122, 182–189, 229–233, and 294–297; these read GRPNVGKS, DTGGI, NKMD, DTAGM, and NKWD. A KH-like domain is found at 352–436; the sequence is KRIPTNVLND…PIKLFARRRQ (85 aa).

The protein belongs to the TRAFAC class TrmE-Era-EngA-EngB-Septin-like GTPase superfamily. EngA (Der) GTPase family. In terms of assembly, associates with the 50S ribosomal subunit.

Its function is as follows. GTPase that plays an essential role in the late steps of ribosome biogenesis. This is GTPase Der from Oceanobacillus iheyensis (strain DSM 14371 / CIP 107618 / JCM 11309 / KCTC 3954 / HTE831).